A 261-amino-acid polypeptide reads, in one-letter code: MNAKGIEGKIAFITGAAQGIGEAVARTLASQGAHIAAVDYNPEKLEKVVSSLKAEGRHAEAFPADVRDSAAIDEITARIEREMGPIDILVNVAGVLRPGLIHSLSDEEWEATFSVNSTGVFNASRSVSKYMMDRRSGSIVTVGSNAAGVPRTSMAAYASSKAAAVMFTKCLGLELAEYNIRCNIVSPGSTETDMQWSLWADENGAEQVIKGSLETFKTGIPLKKLAKPSDIADAVLFLVSGQAGHITMHNLCVDGGATLGV.

NAD(+) is bound at residue 12-36 (FITGAAQGIGEAVARTLASQGAHIA). Serine 144 serves as a coordination point for substrate. Tyrosine 157 acts as the Proton acceptor in catalysis.

It belongs to the short-chain dehydrogenases/reductases (SDR) family.

The protein localises to the cytoplasm. The enzyme catalyses (2S,3S)-2,3-dihydroxy-2,3-dihydrobenzoate + NAD(+) = 2,3-dihydroxybenzoate + NADH + H(+). Its pathway is siderophore biosynthesis; bacillibactin biosynthesis. This is 2,3-dihydro-2,3-dihydroxybenzoate dehydrogenase (dhbA) from Bacillus subtilis (strain 168).